A 463-amino-acid chain; its full sequence is Hexose-6-phosphate:phosphate antiporter (463 aa).

Over 1–24 the chain is Cytoplasmic; it reads MLAFLNQVRKPTLDLPLEVRRKMW. A helical transmembrane segment spans residues 25–45; that stretch reads FKPFMQSYLVVFIGYLTMYLI. The Periplasmic segment spans residues 46–60; that stretch reads RKNFNIAQNDMISTY. The chain crosses the membrane as a helical span at residues 61–81; it reads GLSMTQLGMIGLGFSITYGVG. At 82 to 96 the chain is on the cytoplasmic side; that stretch reads KTLVSYYADGKNTKQ. A helical membrane pass occupies residues 97-117; that stretch reads FLPFMLILSAICMLGFSASMG. Over 118–120 the chain is Periplasmic; that stretch reads SGS. The helical transmembrane segment at 121–141 threads the bilayer; the sequence is VSLFLMIAFYALSGFFQSTGG. Topologically, residues 142–159 are cytoplasmic; that stretch reads SCSYSTITKWTPRRKRGT. A helical transmembrane segment spans residues 160-180; it reads FLGFWNISHNLGGAGAAGVAL. Residues 181-189 lie on the Periplasmic side of the membrane; that stretch reads FGANYLFDG. The chain crosses the membrane as a helical span at residues 190–210; it reads HVIGMFIFPSIIALIVGFIGL. Topologically, residues 211–259 are cytoplasmic; the sequence is RYGSDSPESYGLGKAEELFGEEISEEDKETESTDMTKWQIFVEYVLKNK. A helical transmembrane segment spans residues 260-280; sequence VIWLLCFANIFLYVVRIGIDQ. The Periplasmic portion of the chain corresponds to 281–297; sequence WSTVYAFQELKLSKAVA. Residues 298–318 traverse the membrane as a helical segment; that stretch reads IQGFTLFEAGALVGTLLWGWL. The Cytoplasmic portion of the chain corresponds to 319 to 326; it reads SDLANGRR. A helical transmembrane segment spans residues 327 to 347; that stretch reads GLVACIALALIIATLGVYQHA. Residues 348 to 357 lie on the Periplasmic side of the membrane; sequence SNEYIYLASL. Residues 358 to 378 traverse the membrane as a helical segment; sequence FALGFLVFGPQLLIGVAAVGF. The Cytoplasmic segment spans residues 379-382; that stretch reads VPKK. The helical transmembrane segment at 383-403 threads the bilayer; it reads AIGAADGIKGTFAYLIGDSFA. At 404-425 the chain is on the periplasmic side; that stretch reads KLGLGMIADGTPVFGLTGWAGT. A helical transmembrane segment spans residues 426–446; the sequence is FAALDIAAIGCICLMAIVAVM. The Cytoplasmic portion of the chain corresponds to 447–463; that stretch reads EERKIRREKKIQQLTVA.

This sequence belongs to the major facilitator superfamily. Organophosphate:Pi antiporter (OPA) (TC 2.A.1.4) family.

The protein resides in the cell inner membrane. Mediates the exchange of external hexose 6-phosphate and internal inorganic phosphate. In Escherichia coli O157:H7, this protein is Hexose-6-phosphate:phosphate antiporter (uhpT).